The sequence spans 101 residues: Apolipoprotein C-II (101 aa).

The first 22 residues, 1–22 (MGARHLLALLLVLLVLGFEVQG), serve as a signal peptide directing secretion. Residues 66–74 (TMDEKIRDM) form a lipid binding region. Positions 78 to 101 (STAAVSTYVGIFTDQLLSLLKGDE) are lipoprotein lipase cofactor.

The protein belongs to the apolipoprotein C2 family. In terms of processing, proapolipoprotein C-II is synthesized as a sialic acid containing glycoprotein which is subsequently desialylated prior to its proteolytic processing. Proapolipoprotein C-II, the major form found in plasma undergoes proteolytic cleavage of its N-terminal hexapeptide to generate apolipoprotein C-II, which occurs as the minor form in plasma.

It is found in the secreted. Component of chylomicrons, very low-density lipoproteins (VLDL), low-density lipoproteins (LDL), and high-density lipoproteins (HDL) in plasma. Plays an important role in lipoprotein metabolism as an activator of lipoprotein lipase. Both proapolipoprotein C-II and apolipoprotein C-II can activate lipoprotein lipase. This Tapirus indicus (Asiatic tapir) protein is Apolipoprotein C-II (APOC2).